We begin with the raw amino-acid sequence, 196 residues long: Probable malonic semialdehyde reductase RutE (196 aa).

Belongs to the nitroreductase family. HadB/RutE subfamily. FMN is required as a cofactor.

The enzyme catalyses 3-hydroxypropanoate + NADP(+) = 3-oxopropanoate + NADPH + H(+). Functionally, may reduce toxic product malonic semialdehyde to 3-hydroxypropionic acid, which is excreted. This Klebsiella pneumoniae subsp. pneumoniae (strain ATCC 700721 / MGH 78578) protein is Probable malonic semialdehyde reductase RutE.